A 224-amino-acid polypeptide reads, in one-letter code: Imidazoleglycerol-phosphate dehydratase (224 aa).

It belongs to the imidazoleglycerol-phosphate dehydratase family.

It carries out the reaction D-erythro-1-(imidazol-4-yl)glycerol 3-phosphate = 3-(imidazol-4-yl)-2-oxopropyl phosphate + H2O. The protein operates within amino-acid biosynthesis; L-histidine biosynthesis; L-histidine from 5-phospho-alpha-D-ribose 1-diphosphate: step 6/9. This Komagataella pastoris (Yeast) protein is Imidazoleglycerol-phosphate dehydratase (HIS3).